The following is a 114-amino-acid chain: Macrophage migration inhibitory factor homolog (114 aa).

Proline 2 serves as the catalytic Proton acceptor; via imino nitrogen. Residues lysine 33 and isoleucine 65 each contribute to the substrate site.

The protein belongs to the MIF family.

The protein resides in the secreted. It catalyses the reaction L-dopachrome = 5,6-dihydroxyindole-2-carboxylate. It carries out the reaction 3-phenylpyruvate = enol-phenylpyruvate. In terms of biological role, tautomerization of the methyl ester of L-dopachrome. Inhibits migration of human peripheral blood mononuclear cells. The chain is Macrophage migration inhibitory factor homolog from Trichinella spiralis (Trichina worm).